The chain runs to 298 residues: Anamorsin homolog (298 aa).

An N-terminal SAM-like domain region spans residues 1–143 (MTQLIITHQS…IKAEKPSWKP (143 aa)). Residues 143–162 (PEEGKVLVDDIDLEGSVPDI) are linker. [2Fe-2S] cluster is bound by residues cysteine 175, cysteine 182, cysteine 185, and cysteine 187. Residues 175-187 (CKSKERACNNCNC) are fe-S binding site A. Residues cysteine 218, cysteine 221, cysteine 229, and cysteine 232 each coordinate [4Fe-4S] cluster. 2 consecutive short sequence motifs (cx2C motif) follow at residues 218–221 (CGNC) and 229–232 (CSGC). Residues 218–232 (CGNCYLGDAFRCSGC) are fe-S binding site B.

It belongs to the anamorsin family. Monomer. The cofactor is [2Fe-2S] cluster. It depends on [4Fe-4S] cluster as a cofactor.

The protein resides in the cytoplasm. Its subcellular location is the mitochondrion intermembrane space. Component of the cytosolic iron-sulfur (Fe-S) protein assembly (CIA) machinery. Required for the maturation of extramitochondrial Fe-S proteins. Part of an electron transfer chain functioning in an early step of cytosolic Fe-S biogenesis, facilitating the de novo assembly of a [4Fe-4S] cluster on the cytosolic Fe-S scaffold complex. Electrons are transferred from NADPH via a FAD- and FMN-containing diflavin oxidoreductase. Together with the diflavin oxidoreductase, also required for the assembly of the diferric tyrosyl radical cofactor of ribonucleotide reductase (RNR), probably by providing electrons for reduction during radical cofactor maturation in the catalytic small subunit. This is Anamorsin homolog from Cryptosporidium parvum (strain Iowa II).